The primary structure comprises 133 residues: Ribonucleases P/MRP protein subunit POP8 (133 aa).

As to quaternary structure, component of nuclear RNase P and RNase MRP complexes. RNase P consists of an RNA moiety and at least 9 protein subunits including POP1, POP3, POP4, POP5, POP6, POP7, POP8, RPP1 and RPR2. RNase MRP complex consists of an RNA moiety and at least 10 protein subunits including POP1, POP3, POP4, POP5, POP6, POP7, POP8, RMP1, RPP1 and SNM1, many of which are shared with the RNase P complex.

The protein localises to the nucleus. The catalysed reaction is Endonucleolytic cleavage of RNA, removing 5'-extranucleotides from tRNA precursor.. Its function is as follows. Component of ribonuclease P, a protein complex that generates mature tRNA molecules by cleaving their 5'-ends. Also a component of RNase MRP, which cleaves pre-rRNA sequences. The polypeptide is Ribonucleases P/MRP protein subunit POP8 (POP8) (Saccharomyces cerevisiae (strain ATCC 204508 / S288c) (Baker's yeast)).